Reading from the N-terminus, the 214-residue chain is MGDILDYNTTALFICDPQKYYLDRVGGIDVIVRNIKCLIDSCKELEIKTFMTKHNPSIYDEIIEELEPSNHPVFEKTLYSMYTKDLKKNIDELYNSNVRDPTNYLRTVILAGFETHVCIIQTALDLIREGYTVHVITDATASIDSLEYTASLKRLKQSGVYLTTTEAVLFQLLRDDANPKSSKIIDLITNRSISLPSYYKEDEYGVQITHSKSN.

The protein belongs to the isochorismatase family.

This chain is Isochorismatase family protein 2B, found in Dictyostelium discoideum (Social amoeba).